The chain runs to 432 residues: Adenylosuccinate synthetase (432 aa).

Residues Gly12–Lys18 and Gly40–Thr42 each bind GTP. The Proton acceptor role is filled by Asp13. Residues Asp13 and Gly40 each contribute to the Mg(2+) site. IMP is bound by residues Asp13–Lys16, Asn38–His41, Thr131, Arg145, Gln226, Thr241, and Arg305. The active-site Proton donor is the His41. Ala301–Arg307 serves as a coordination point for substrate. Residues Arg307, Lys333–Asp335, and Ser415–Gly417 each bind GTP.

The protein belongs to the adenylosuccinate synthetase family. As to quaternary structure, homodimer. Requires Mg(2+) as cofactor.

It localises to the cytoplasm. The catalysed reaction is IMP + L-aspartate + GTP = N(6)-(1,2-dicarboxyethyl)-AMP + GDP + phosphate + 2 H(+). Its pathway is purine metabolism; AMP biosynthesis via de novo pathway; AMP from IMP: step 1/2. Its function is as follows. Plays an important role in the de novo pathway of purine nucleotide biosynthesis. Catalyzes the first committed step in the biosynthesis of AMP from IMP. This chain is Adenylosuccinate synthetase, found in Magnetococcus marinus (strain ATCC BAA-1437 / JCM 17883 / MC-1).